The primary structure comprises 301 residues: Porphobilinogen deaminase (301 aa).

Cys242 is subject to S-(dipyrrolylmethanemethyl)cysteine.

The protein belongs to the HMBS family. Monomer. Dipyrromethane is required as a cofactor.

It carries out the reaction 4 porphobilinogen + H2O = hydroxymethylbilane + 4 NH4(+). It participates in porphyrin-containing compound metabolism; protoporphyrin-IX biosynthesis; coproporphyrinogen-III from 5-aminolevulinate: step 2/4. Its function is as follows. Tetrapolymerization of the monopyrrole PBG into the hydroxymethylbilane pre-uroporphyrinogen in several discrete steps. The protein is Porphobilinogen deaminase of Rickettsia canadensis (strain McKiel).